Consider the following 218-residue polypeptide: Thiopurine S-methyltransferase (218 aa).

Residues Trp10, Leu45, Glu66, and Arg123 each coordinate S-adenosyl-L-methionine.

This sequence belongs to the class I-like SAM-binding methyltransferase superfamily. TPMT family.

It is found in the cytoplasm. The catalysed reaction is S-adenosyl-L-methionine + a thiopurine = S-adenosyl-L-homocysteine + a thiopurine S-methylether.. This chain is Thiopurine S-methyltransferase, found in Shewanella amazonensis (strain ATCC BAA-1098 / SB2B).